The sequence spans 354 residues: Uroporphyrinogen decarboxylase (354 aa).

Substrate contacts are provided by residues 27-31 (RQAGR), D77, Y153, T208, and H326.

This sequence belongs to the uroporphyrinogen decarboxylase family. As to quaternary structure, homodimer.

It localises to the cytoplasm. The catalysed reaction is uroporphyrinogen III + 4 H(+) = coproporphyrinogen III + 4 CO2. It participates in porphyrin-containing compound metabolism; protoporphyrin-IX biosynthesis; coproporphyrinogen-III from 5-aminolevulinate: step 4/4. Functionally, catalyzes the decarboxylation of four acetate groups of uroporphyrinogen-III to yield coproporphyrinogen-III. In Neisseria gonorrhoeae (strain ATCC 700825 / FA 1090), this protein is Uroporphyrinogen decarboxylase.